Reading from the N-terminus, the 172-residue chain is Thioredoxin Y1, chloroplastic (172 aa).

Residues 1 to 62 constitute a chloroplast transit peptide; it reads MASISLSSST…SSTTRCTPRR (62 aa). A Thioredoxin domain is found at 63–169; the sequence is IEAKKQTFDS…LIQRIEDSLK (107 aa). Catalysis depends on nucleophile residues C93 and C96. C93 and C96 are oxidised to a cystine.

It belongs to the thioredoxin family. Plant Y-type subfamily. As to expression, expressed in roots and seeds.

The protein resides in the plastid. The protein localises to the chloroplast stroma. Functionally, thiol-disulfide oxidoreductase that poorly activates chloroplastic malate dehydrogenase (NADP-MDH) and fructose-1,6-bisphosphatase. Provides reducing equivalents for peroxiredoxin Q. This Arabidopsis thaliana (Mouse-ear cress) protein is Thioredoxin Y1, chloroplastic.